The primary structure comprises 304 residues: Homoserine kinase (304 aa).

90-100 (PLARGLGSSAS) is an ATP binding site.

It belongs to the GHMP kinase family. Homoserine kinase subfamily.

Its subcellular location is the cytoplasm. It catalyses the reaction L-homoserine + ATP = O-phospho-L-homoserine + ADP + H(+). It participates in amino-acid biosynthesis; L-threonine biosynthesis; L-threonine from L-aspartate: step 4/5. In terms of biological role, catalyzes the ATP-dependent phosphorylation of L-homoserine to L-homoserine phosphate. The sequence is that of Homoserine kinase from Staphylococcus aureus (strain MRSA252).